Consider the following 152-residue polypeptide: Xanthine-guanine phosphoribosyltransferase (152 aa).

5-phospho-alpha-D-ribose 1-diphosphate-binding positions include 37 to 38 (RG), Arg-69, and 88 to 96 (DDLVDTGGT). Residue Arg-69 participates in GMP binding. A Mg(2+)-binding site is contributed by Asp-89. Asp-92 and Ile-135 together coordinate guanine. The xanthine site is built by Asp-92 and Ile-135. GMP contacts are provided by residues 92-96 (DTGGT) and 134-135 (WI).

The protein belongs to the purine/pyrimidine phosphoribosyltransferase family. XGPT subfamily. As to quaternary structure, homotetramer. The cofactor is Mg(2+).

The protein localises to the cell inner membrane. It carries out the reaction GMP + diphosphate = guanine + 5-phospho-alpha-D-ribose 1-diphosphate. The enzyme catalyses XMP + diphosphate = xanthine + 5-phospho-alpha-D-ribose 1-diphosphate. It catalyses the reaction IMP + diphosphate = hypoxanthine + 5-phospho-alpha-D-ribose 1-diphosphate. Its pathway is purine metabolism; GMP biosynthesis via salvage pathway; GMP from guanine: step 1/1. It participates in purine metabolism; XMP biosynthesis via salvage pathway; XMP from xanthine: step 1/1. Purine salvage pathway enzyme that catalyzes the transfer of the ribosyl-5-phosphate group from 5-phospho-alpha-D-ribose 1-diphosphate (PRPP) to the N9 position of the 6-oxopurines guanine and xanthine to form the corresponding ribonucleotides GMP (guanosine 5'-monophosphate) and XMP (xanthosine 5'-monophosphate), with the release of PPi. To a lesser extent, also acts on hypoxanthine. The polypeptide is Xanthine-guanine phosphoribosyltransferase (Yersinia pseudotuberculosis serotype O:1b (strain IP 31758)).